Reading from the N-terminus, the 124-residue chain is MATINQLVRQPRAKQVVKSNVPALEACPQKRGVCTRVYTTTPKKPNSALRKVCRVRLTNGFEVTSYIGGEGHNLQEHSVVLIRGGRVKDLPGVRYHTVRGALDCAGVNDRKKGRSKYGVKRPKS.

Aspartate 89 is modified (3-methylthioaspartic acid).

Belongs to the universal ribosomal protein uS12 family. As to quaternary structure, part of the 30S ribosomal subunit. Contacts proteins S8 and S17. May interact with IF1 in the 30S initiation complex.

With S4 and S5 plays an important role in translational accuracy. Functionally, interacts with and stabilizes bases of the 16S rRNA that are involved in tRNA selection in the A site and with the mRNA backbone. Located at the interface of the 30S and 50S subunits, it traverses the body of the 30S subunit contacting proteins on the other side and probably holding the rRNA structure together. The combined cluster of proteins S8, S12 and S17 appears to hold together the shoulder and platform of the 30S subunit. The polypeptide is Small ribosomal subunit protein uS12 (Aliivibrio salmonicida (strain LFI1238) (Vibrio salmonicida (strain LFI1238))).